The primary structure comprises 185 residues: Ribosome-recycling factor (185 aa).

Belongs to the RRF family.

It localises to the cytoplasm. Functionally, responsible for the release of ribosomes from messenger RNA at the termination of protein biosynthesis. May increase the efficiency of translation by recycling ribosomes from one round of translation to another. In Marinomonas sp. (strain MWYL1), this protein is Ribosome-recycling factor.